We begin with the raw amino-acid sequence, 426 residues long: Serine hydroxymethyltransferase (426 aa).

(6S)-5,6,7,8-tetrahydrofolate contacts are provided by residues leucine 118 and 122-124; that span reads GHL. Lysine 227 carries the post-translational modification N6-(pyridoxal phosphate)lysine. The disordered stretch occupies residues 342–368; that stretch reads NTIPNDPKPPTQASGIRLGTPAMTTRG.

It belongs to the SHMT family. Homodimer. Requires pyridoxal 5'-phosphate as cofactor.

It is found in the cytoplasm. It catalyses the reaction (6R)-5,10-methylene-5,6,7,8-tetrahydrofolate + glycine + H2O = (6S)-5,6,7,8-tetrahydrofolate + L-serine. It participates in one-carbon metabolism; tetrahydrofolate interconversion. Its pathway is amino-acid biosynthesis; glycine biosynthesis; glycine from L-serine: step 1/1. Catalyzes the reversible interconversion of serine and glycine with tetrahydrofolate (THF) serving as the one-carbon carrier. This reaction serves as the major source of one-carbon groups required for the biosynthesis of purines, thymidylate, methionine, and other important biomolecules. Also exhibits THF-independent aldolase activity toward beta-hydroxyamino acids, producing glycine and aldehydes, via a retro-aldol mechanism. The polypeptide is Serine hydroxymethyltransferase (Thermomicrobium roseum (strain ATCC 27502 / DSM 5159 / P-2)).